The sequence spans 180 residues: Crossover junction endodeoxyribonuclease RuvC (180 aa).

Catalysis depends on residues D7, E66, and D138. Residues D7, E66, and D138 each contribute to the Mg(2+) site.

The protein belongs to the RuvC family. Homodimer which binds Holliday junction (HJ) DNA. The HJ becomes 2-fold symmetrical on binding to RuvC with unstacked arms; it has a different conformation from HJ DNA in complex with RuvA. In the full resolvosome a probable DNA-RuvA(4)-RuvB(12)-RuvC(2) complex forms which resolves the HJ. Requires Mg(2+) as cofactor.

The protein resides in the cytoplasm. It carries out the reaction Endonucleolytic cleavage at a junction such as a reciprocal single-stranded crossover between two homologous DNA duplexes (Holliday junction).. In terms of biological role, the RuvA-RuvB-RuvC complex processes Holliday junction (HJ) DNA during genetic recombination and DNA repair. Endonuclease that resolves HJ intermediates. Cleaves cruciform DNA by making single-stranded nicks across the HJ at symmetrical positions within the homologous arms, yielding a 5'-phosphate and a 3'-hydroxyl group; requires a central core of homology in the junction. The consensus cleavage sequence is 5'-(A/T)TT(C/G)-3'. Cleavage occurs on the 3'-side of the TT dinucleotide at the point of strand exchange. HJ branch migration catalyzed by RuvA-RuvB allows RuvC to scan DNA until it finds its consensus sequence, where it cleaves and resolves the cruciform DNA. This chain is Crossover junction endodeoxyribonuclease RuvC, found in Burkholderia vietnamiensis (strain G4 / LMG 22486) (Burkholderia cepacia (strain R1808)).